Consider the following 37-residue polypeptide: Large ribosomal subunit protein bL36c (37 aa).

It belongs to the bacterial ribosomal protein bL36 family.

The protein localises to the plastid. Its subcellular location is the chloroplast. The polypeptide is Large ribosomal subunit protein bL36c (Populus alba (White poplar)).